Reading from the N-terminus, the 749-residue chain is Ribosomal RNA large subunit methyltransferase K/L (749 aa).

Positions 43–154 constitute a THUMP domain; the sequence is QGYKVCLWSR…KDKATIYLDL (112 aa). The segment at 386–406 is disordered; it reads VEPVAPKKTNKETPEPINPWT.

Belongs to the methyltransferase superfamily. RlmKL family.

The protein resides in the cytoplasm. The catalysed reaction is guanosine(2445) in 23S rRNA + S-adenosyl-L-methionine = N(2)-methylguanosine(2445) in 23S rRNA + S-adenosyl-L-homocysteine + H(+). It carries out the reaction guanosine(2069) in 23S rRNA + S-adenosyl-L-methionine = N(2)-methylguanosine(2069) in 23S rRNA + S-adenosyl-L-homocysteine + H(+). Specifically methylates the guanine in position 2445 (m2G2445) and the guanine in position 2069 (m7G2069) of 23S rRNA. This is Ribosomal RNA large subunit methyltransferase K/L from Psychromonas ingrahamii (strain DSM 17664 / CCUG 51855 / 37).